Reading from the N-terminus, the 314-residue chain is Formate-nitrite transporter (314 aa).

Residues 1-47 are Cytoplasmic-facing; the sequence is MQKSTSKYVIDPISIKTNCSSEESYIRCVEYGKGKAHYRNLILLAKA. Residues 48–68 form a helical membrane-spanning segment; the sequence is ILAGVFVGVCAHASGIAGGLF. At 69 to 77 the chain is on the extracellular side; the sequence is YYHKLREYV. Residues 78 to 98 traverse the membrane as a helical segment; sequence GISMSAFVYGFTFPIAFLCII. The Cytoplasmic segment spans residues 99–128; that stretch reads CTGSDLFTGNTLAVTTALLQKKLGLLCYMR. A helical transmembrane segment spans residues 129 to 149; it reads VMCISLVGNYIGAVAFAFFVS. Topologically, residues 150–185 are extracellular; that stretch reads YGSGAFSINTDTSKNHIFQFLNDIAIKKVSHSFIEC. The chain crosses the membrane as a helical span at residues 186–206; sequence ICLAIGCNIFVCLAVYFVLSI. Topologically, residues 207 to 211 are cytoplasmic; it reads KDGSG. Residues 212 to 232 traverse the membrane as a helical segment; the sequence is LVFSVFFAVYAFAIAGYEHII. Topologically, residues 233 to 260 are extracellular; the sequence is ANIYTLNLALMISNDISFTQVYFKNLLP. Residues 261 to 281 form a helical membrane-spanning segment; that stretch reads TLIGNYIAGGLVLAFPLFFIY. Residues 282–314 lie on the Cytoplasmic side of the membrane; it reads RSCYYDYDKMNDELNTVVLKTLSLELQNESNHI.

It belongs to the FNT transporter (TC 1.A.16) family. Homopentamer.

Its subcellular location is the cell membrane. It localises to the vacuole membrane. It carries out the reaction (S)-lactate(in) + H(+)(in) = (S)-lactate(out) + H(+)(out). The enzyme catalyses formate(in) + H(+)(in) = formate(out) + H(+)(out). It catalyses the reaction pyruvate(out) + H(+)(out) = pyruvate(in) + H(+)(in). The catalysed reaction is acetate(out) + H(+)(out) = acetate(in) + H(+)(in). Inhibited by the Malaria Box compound MMV007839 and its derivatives BH296 and BH267.meta. Functionally, monocarboxylate-proton symporter that mediates the efflux of the waste product lactate in the intraerythrocytic parasites; active in acidic-to-neutral pH range. Transports L-lactate. This Plasmodium malariae protein is Formate-nitrite transporter.